The sequence spans 1475 residues: Sterol 3-beta-glucosyltransferase (1475 aa).

2 disordered regions span residues 1 to 73 (MPPP…PPMF) and 94 to 218 (HDRF…EDDK). The segment covering 8-17 (LPLHGPAGAA) has biased composition (low complexity). Basic residues predominate over residues 30 to 40 (RVGKKLQKKRH). Over residues 108-118 (GPQRDSADRSH) the composition is skewed to basic and acidic residues. A compositionally biased stretch (basic residues) spans 156–168 (EKHKRKISGHKLL). The region spanning 270-315 (QDIFEFDQPEAVIEEYPCWLLQSVLLQGYMYITAKHICFYSYLPKK) is the GRAM 1 domain. The PH domain maps to 318–413 (EVVKSGYLSK…WVKSLQRVIF (96 aa)). Disordered regions lie at residues 492–541 (ARLK…TTNK), 594–636 (SSPR…MEEP), and 653–715 (QILR…PVTP). Positions 505 to 531 (QQQQQQHPMQPPMQASARSSMSGSRRA) are enriched in low complexity. Composition is skewed to polar residues over residues 621–634 (QQGS…SSME) and 653–674 (QILR…SASR). Residues 675 to 686 (TEVEKQQRRDPR) show a composition bias toward basic and acidic residues. Positions 798 to 901 (RFRAHFALPE…RDDCAVTLLQ (104 aa)) constitute a GRAM 2 domain. Residues Ser-989, Arg-990, Asp-992, Ala-1293, His-1295, His-1308, Ser-1311, Gly-1312, Thr-1313, Asp-1332, and Gln-1333 each coordinate UDP-alpha-D-glucose. The segment at 1413–1475 (IQVEPDEDEE…RVSPSQQSVA (63 aa)) is disordered. The segment covering 1416–1425 (EPDEDEESAE) has biased composition (acidic residues).

This sequence belongs to the glycosyltransferase 28 family.

It localises to the cytoplasm. It is found in the preautophagosomal structure membrane. The enzyme catalyses a sterol + UDP-alpha-D-glucose = a sterol 3-beta-D-glucoside + UDP + H(+). It carries out the reaction ergosterol + UDP-alpha-D-glucose = ergosteryl 3-beta-D-glucoside + UDP + H(+). Functionally, sterol glycosyltransferase responsible for the glycosylation of ergosterol to form ergosterol-glucoside. Mediates autophagic degradation of peroxisomes (pexophagy) and is involved in pathogenesis via peroxisome degradation inside appressoria that are developing into the host invasion stage. The chain is Sterol 3-beta-glucosyltransferase from Glomerella lagenarium (Anthracnose fungus).